Here is a 122-residue protein sequence, read N- to C-terminus: Probable DNA-directed RNA polymerase II subunit RPB11 (122 aa).

It belongs to the archaeal Rpo11/eukaryotic RPB11/RPC19 RNA polymerase subunit family. In terms of assembly, component of the RNA polymerase II (Pol II) complex consisting of 12 subunits.

Its subcellular location is the nucleus. DNA-dependent RNA polymerase catalyzes the transcription of DNA into RNA using the four ribonucleoside triphosphates as substrates. Component of RNA polymerase II which synthesizes mRNA precursors and many functional non-coding RNAs. Pol II is the central component of the basal RNA polymerase II transcription machinery. It is composed of mobile elements that move relative to each other. RPB11 is part of the core element with the central large cleft. This is Probable DNA-directed RNA polymerase II subunit RPB11 (rpb-11) from Caenorhabditis elegans.